We begin with the raw amino-acid sequence, 174 residues long: Nucleoside-triphosphatase THEP1 (174 aa).

Residues 15-22 (GMPGVGKT) and 102-109 (LAIVDEIG) each bind ATP.

Belongs to the THEP1 NTPase family.

It catalyses the reaction a ribonucleoside 5'-triphosphate + H2O = a ribonucleoside 5'-diphosphate + phosphate + H(+). Has nucleotide phosphatase activity towards ATP, GTP, CTP, TTP and UTP. May hydrolyze nucleoside diphosphates with lower efficiency. This is Nucleoside-triphosphatase THEP1 from Pyrobaculum islandicum (strain DSM 4184 / JCM 9189 / GEO3).